The following is a 284-amino-acid chain: Tropomyosin alpha-1 chain (284 aa).

A disordered region spans residues 1–37; sequence MDAIKKKMQMLKLDKENALDRAEQAETDKKAAEERSK. Positions 1–284 form a coiled coil; that stretch reads MDAIKKKMQM…DHALNDMTSI (284 aa). A compositionally biased stretch (basic and acidic residues) spans 12-37; sequence KLDKENALDRAEQAETDKKAAEERSK.

It belongs to the tropomyosin family. As to quaternary structure, homodimer. Heterodimer of an alpha (TPM1, TPM3 or TPM4) and a beta (TPM2) chain.

The protein localises to the cytoplasm. It is found in the cytoskeleton. Binds to actin filaments in muscle and non-muscle cells. Plays a central role, in association with the troponin complex, in the calcium dependent regulation of vertebrate striated muscle contraction. Smooth muscle contraction is regulated by interaction with caldesmon. In non-muscle cells is implicated in stabilizing cytoskeleton actin filaments. The protein is Tropomyosin alpha-1 chain (tpma) of Danio rerio (Zebrafish).